A 555-amino-acid chain; its full sequence is Formate--tetrahydrofolate ligase (555 aa).

T64–T71 is a binding site for ATP.

It belongs to the formate--tetrahydrofolate ligase family.

It carries out the reaction (6S)-5,6,7,8-tetrahydrofolate + formate + ATP = (6R)-10-formyltetrahydrofolate + ADP + phosphate. It participates in one-carbon metabolism; tetrahydrofolate interconversion. This Dinoroseobacter shibae (strain DSM 16493 / NCIMB 14021 / DFL 12) protein is Formate--tetrahydrofolate ligase.